The following is a 255-amino-acid chain: ATP synthase subunit a (255 aa).

The propeptide at 1-6 (MNFIIN) is removed in mature form. The next 5 membrane-spanning stretches (helical) occupy residues 32 to 52 (LTSF…FSIL), 91 to 111 (LFPF…VSLV), 121 to 141 (LIWT…TGLA), 159 to 200 (PLVP…LAGL), and 219 to 251 (LSIL…IKDA).

In terms of assembly, F-type ATP synthases have 2 components, the catalytic core F(1) and the membrane-embedded component F(0), linked together by a central stalk and a peripheral stalk. The central stalk, also called rotor shaft, is often seen as part of F(1). The peripheral stalk is seen as part of F(0). F(0) contains the membrane channel next to the rotor. F-type ATP synthases form dimers but each monomer functions independently in ATP generation. The dimer consists of 17 different polypeptides: ATP1 (subunit alpha, 3 molecules per monomer, part of F(1)), ATP2 (subunit beta, 3 copies per monomer, part of F(1)), ATP3 (subunit gamma, part of the central stalk), ATP4 (subunit b, part of the peripheral stalk), ATP5/OSCP (subunit 5/OSCP, part of the peripheral stalk), ATP6 (subunit a, part of the peripheral stalk), ATP7 (subunit d, part of the peripheral stalk), ATP8 (subunit 8, part of the peripheral stalk), OLI1 (subunit c, part of the rotor, 10 molecules per monomer), ATP14 (subunit h, part of the peripheral stalk), ATP15 (subunit epsilon, part of the central stalk), ATP16 (subunit delta, part of the central stalk), ATP17 (subunit f, part of the peripheral stalk), ATP18 (subunit i/j, part of the peripheral stalk), ATP19 (subunit k, dimer-specific, at interface between monomers), ATP20 (subunit g, at interface between monomers), TIM11 (subunit e, at interface between monomers).

The protein localises to the mitochondrion inner membrane. In terms of biological role, mitochondrial membrane ATP synthase (F(1)F(0) ATP synthase or Complex V) produces ATP from ADP in the presence of a proton gradient across the membrane which is generated by electron transport complexes of the respiratory chain. F-type ATP synthases consist of two structural domains, F(1) - containing the extramembraneous catalytic core, and F(0) - containing the membrane proton channel, linked together by a central stalk and a peripheral stalk. During catalysis, ATP synthesis in the catalytic domain of F(1) is coupled via a rotary mechanism of the central stalk subunits to proton translocation. Key component of the proton channel; it may play a direct role in the translocation of protons across the membrane. This chain is ATP synthase subunit a, found in Yarrowia lipolytica (strain CLIB 122 / E 150) (Yeast).